The primary structure comprises 84 residues: Small ribosomal subunit protein eS27-like (84 aa).

Basic and acidic residues predominate over residues 1–16; that stretch reads MPLARDLLHPSLEEEK. The interval 1–23 is disordered; the sequence is MPLARDLLHPSLEEEKKKHKKKR. A C4-type zinc finger spans residues 38–60; that stretch reads PGCYKITTVFSHAQTVVLCVGCS.

This sequence belongs to the eukaryotic ribosomal protein eS27 family. The cofactor is Zn(2+).

The chain is Small ribosomal subunit protein eS27-like from Mus musculus (Mouse).